A 98-amino-acid chain; its full sequence is Integration host factor subunit alpha (98 aa).

It belongs to the bacterial histone-like protein family. In terms of assembly, heterodimer of an alpha and a beta chain.

In terms of biological role, this protein is one of the two subunits of integration host factor, a specific DNA-binding protein that functions in genetic recombination as well as in transcriptional and translational control. This chain is Integration host factor subunit alpha, found in Acinetobacter baumannii (strain AB307-0294).